Here is a 62-residue protein sequence, read N- to C-terminus: Small ribosomal subunit protein eS17 (62 aa).

The protein belongs to the eukaryotic ribosomal protein eS17 family.

The polypeptide is Small ribosomal subunit protein eS17 (Methanoculleus marisnigri (strain ATCC 35101 / DSM 1498 / JR1)).